The primary structure comprises 245 residues: Outer dense fiber protein 1 (245 aa).

Residues Ser-5 and Ser-10 each carry the phosphoserine modification. Copy 1 of the repeat occupies 34 to 38; that stretch reads RCLCD. The segment at 34-78 is 2 X 5 AA repeats of [RC]-C-L-C-D; it reads RCLCDLYMHPYCCCDLHPYPYCLCYSKRSRSCGLCDLYYPCCLCD. Ser-64 bears the Phosphoserine mark. Repeat unit 2 spans residues 74–78; the sequence is CCLCD. Ser-87, Ser-108, Ser-109, Ser-137, Ser-153, Ser-175, and Ser-180 each carry phosphoserine. The segment at 195-233 is C-X-P repeat region; the sequence is CNPCNPCSPCSPCGPCGPCGPCGPCGPCGPCDPCNPCYP.

In terms of assembly, interacts (via leucine zipper motif) with TCP11. Interacts with SPAG4. Interacts with KLC3. Interacts with CCDC42. As to expression, testis. Specifically located to the round spermatid layer and to the luminally-oriented cytoplasm of elongated spermatids.

It is found in the cell projection. The protein localises to the cilium. It localises to the flagellum. Its subcellular location is the cytoplasm. The protein resides in the cytoskeleton. It is found in the microtubule organizing center. The protein localises to the centrosome. Functionally, component of the outer dense fibers (ODF) of spermatozoa. ODF are filamentous structures located on the outside of the axoneme in the midpiece and principal piece of the mammalian sperm tail and may help to maintain the passive elastic structures and elastic recoil of the sperm tail. In Rattus norvegicus (Rat), this protein is Outer dense fiber protein 1 (Odf1).